The sequence spans 220 residues: RING-H2 finger protein ATL77 (220 aa).

Residues 53 to 73 (LMLLSILLCGIICSLGLHYII) traverse the membrane as a helical segment. The RING-type; atypical zinc-finger motif lies at 130–172 (CVICLSDFVAGEQLRVLPKCNHGFHLRCIDKWLTQHMTCPKCR).

This sequence belongs to the RING-type zinc finger family. ATL subfamily.

The protein localises to the membrane. It carries out the reaction S-ubiquitinyl-[E2 ubiquitin-conjugating enzyme]-L-cysteine + [acceptor protein]-L-lysine = [E2 ubiquitin-conjugating enzyme]-L-cysteine + N(6)-ubiquitinyl-[acceptor protein]-L-lysine.. It participates in protein modification; protein ubiquitination. In Arabidopsis thaliana (Mouse-ear cress), this protein is RING-H2 finger protein ATL77 (ATL77).